Here is a 291-residue protein sequence, read N- to C-terminus: tRNA dimethylallyltransferase (291 aa).

Position 9–16 (9–16) interacts with ATP; the sequence is GTTASGKS. 11-16 contributes to the substrate binding site; that stretch reads TASGKS. An interaction with substrate tRNA region spans residues 34-37; sequence DSLA.

It belongs to the IPP transferase family. Monomer. Mg(2+) serves as cofactor.

It carries out the reaction adenosine(37) in tRNA + dimethylallyl diphosphate = N(6)-dimethylallyladenosine(37) in tRNA + diphosphate. Catalyzes the transfer of a dimethylallyl group onto the adenine at position 37 in tRNAs that read codons beginning with uridine, leading to the formation of N6-(dimethylallyl)adenosine (i(6)A). This Campylobacter concisus (strain 13826) protein is tRNA dimethylallyltransferase.